The following is a 216-amino-acid chain: Uracil phosphoribosyltransferase (216 aa).

30–34 lines the GTP pocket; it reads KNLVR. 5-phospho-alpha-D-ribose 1-diphosphate contacts are provided by residues R80, R105, and 140–148; that span reads DPMIATAST. Uracil contacts are provided by residues I203 and 208 to 210; that span reads GDA. Residue D209 participates in 5-phospho-alpha-D-ribose 1-diphosphate binding.

Belongs to the UPRTase family. Mg(2+) is required as a cofactor.

It carries out the reaction UMP + diphosphate = 5-phospho-alpha-D-ribose 1-diphosphate + uracil. Its pathway is pyrimidine metabolism; UMP biosynthesis via salvage pathway; UMP from uracil: step 1/1. With respect to regulation, allosterically activated by GTP. Functionally, catalyzes the conversion of uracil and 5-phospho-alpha-D-ribose 1-diphosphate (PRPP) to UMP and diphosphate. This chain is Uracil phosphoribosyltransferase, found in Saccharolobus islandicus (strain Y.N.15.51 / Yellowstone #2) (Sulfolobus islandicus).